The chain runs to 489 residues: Long chain base biosynthesis protein 2d (489 aa).

A helical membrane pass occupies residues 4-24 (LPYVTALTTLFSYGLLFAFGQ). Lysine 311 is subject to N6-(pyridoxal phosphate)lysine.

This sequence belongs to the class-II pyridoxal-phosphate-dependent aminotransferase family. As to quaternary structure, heterodimer with LCB1. Component of the serine palmitoyltransferase (SPT) complex, composed of LCB1 and LCB2. Pyridoxal 5'-phosphate is required as a cofactor.

The protein localises to the endoplasmic reticulum membrane. It catalyses the reaction L-serine + hexadecanoyl-CoA + H(+) = 3-oxosphinganine + CO2 + CoA. It participates in lipid metabolism; sphingolipid metabolism. Its function is as follows. Serine palmitoyltransferase (SPT). The heterodimer formed with LCB1 constitutes the catalytic core. The polypeptide is Long chain base biosynthesis protein 2d (Oryza sativa subsp. japonica (Rice)).